The chain runs to 210 residues: 2-hydroxy-3-keto-5-methylthiopentenyl-1-phosphate phosphatase (210 aa).

This sequence belongs to the HAD-like hydrolase superfamily. MtnX family.

It catalyses the reaction 2-hydroxy-5-methylsulfanyl-3-oxopent-1-enyl phosphate + H2O = 1,2-dihydroxy-5-(methylsulfanyl)pent-1-en-3-one + phosphate. The protein operates within amino-acid biosynthesis; L-methionine biosynthesis via salvage pathway; L-methionine from S-methyl-5-thio-alpha-D-ribose 1-phosphate: step 4/6. Its function is as follows. Dephosphorylates 2-hydroxy-3-keto-5-methylthiopentenyl-1-phosphate (HK-MTPenyl-1-P) yielding 1,2-dihydroxy-3-keto-5-methylthiopentene (DHK-MTPene). The sequence is that of 2-hydroxy-3-keto-5-methylthiopentenyl-1-phosphate phosphatase from Microcystis aeruginosa (strain NIES-843 / IAM M-2473).